The chain runs to 144 residues: Na(+)/H(+) antiporter subunit B (144 aa).

4 consecutive transmembrane segments (helical) span residues 9–31 (VLLHTLTRVVTFIILAFSVYLFF), 41–58 (FIGGLMTASALLLMYLGF), 75–97 (IAFGLLIAIFTGFGGLLVGDPYL), and 117–139 (ALPFDLGIYLVVIGIALTIILTI).

This sequence belongs to the CPA3 antiporters (TC 2.A.63) subunit B family. In terms of assembly, forms a heterooligomeric complex that consists of seven subunits: MrpA, MrpB, MrpC, MrpD, MrpE, MrpF and MrpG.

The protein resides in the cell membrane. In terms of biological role, mnh complex is a Na(+)Li(+)/H(+) antiporter involved in Na(+) and/or Li(+) excretion and Na(+) resistance. Na(+)/H(+) antiport consumes a transmembrane electrical potential, and is thus inferred to be electrogenic. Does not transport K(+), Ca(2+) or Mg(2+). This chain is Na(+)/H(+) antiporter subunit B (mrpB), found in Alkalihalophilus pseudofirmus (strain ATCC BAA-2126 / JCM 17055 / OF4) (Bacillus pseudofirmus).